We begin with the raw amino-acid sequence, 137 residues long: TSC22 domain family protein 3 (137 aa).

The tract at residues 1-60 (MNTEMYQTPMEVAVYQLHNFSISFFSSLLGGDVVSVKLDNSASGASVVALDNKIEQAMDL) is AP1-binding. Residues N40 and V73 each carry the phosphoserine modification. The interval 76–97 (LKEQIRELLEKNSQLERENTLL) is leucine-zipper. The segment at 101–137 (ASPEQLEKFQSRLSPEEPAPEAPETPETPEAPGGSAV) is disordered. Phosphoserine is present on S102. Residues T125 and T128 each carry the phosphothreonine modification. Residues 128-137 (TPEAPGGSAV) are compositionally biased toward low complexity.

This sequence belongs to the TSC-22/Dip/Bun family. Can form homodimers, however it is likely to function as a monomer. Interacts with NFKB1. Interacts (via N-terminus) with JUN and FOS; these interactions inhibit the binding of active AP1 to its target DNA. As to quaternary structure, interacts with MYOD1. Interacts with HDAC1; this interaction affects HDAC1 activity on MYOG promoter and thus inhibits MYOD1 transcriptional activity. In terms of assembly, interacts with MYOD1. As to expression, expressed in T-cells. Expression inversely correlates with T-cell activation, being higher in resting cells and lower in cells activated by TCR/CD3 triggering (at protein level). Constitutively expressed in lung, intestine, kidney and liver, most probably by resident cells from the macrophage lineage. Expressed in thymus, lymph nodes, bone marrow, spleen, lung and skeletal muscle. Expressed in spleen and skeletal muscle (at protein level). Expressed in the cortex, medulla and papilla of the kidney. In terms of tissue distribution, expressed in the cortex, medulla and papilla of the kidney. As to expression, expressed in spleen and skeletal muscle (at protein level).

It localises to the cytoplasm. The protein resides in the nucleus. Functionally, protects T-cells from IL2 deprivation-induced apoptosis through the inhibition of FOXO3A transcriptional activity that leads to the down-regulation of the pro-apoptotic factor BCL2L11. In macrophages, plays a role in the anti-inflammatory and immunosuppressive effects of glucocorticoids and IL10. In T-cells, inhibits anti-CD3-induced NFKB1 nuclear translocation and thereby NFKB1 DNA-binding activities. In vitro, suppresses AP-1 transcription factor complex DNA-binding activities. Its function is as follows. Inhibits myogenic differentiation and mediates anti-myogenic effects of glucocorticoids by binding and regulating MYOD1 and HDAC1 transcriptional activity resulting in reduced expression of MYOG. This chain is TSC22 domain family protein 3, found in Mus musculus (Mouse).